The chain runs to 87 residues: Large ribosomal subunit protein bL31B (87 aa).

Belongs to the bacterial ribosomal protein bL31 family. Type B subfamily. As to quaternary structure, part of the 50S ribosomal subunit.

The protein is Large ribosomal subunit protein bL31B of Burkholderia thailandensis (strain ATCC 700388 / DSM 13276 / CCUG 48851 / CIP 106301 / E264).